We begin with the raw amino-acid sequence, 407 residues long: Peptidase T (407 aa).

Histidine 82 serves as a coordination point for Zn(2+). The active site involves aspartate 84. Aspartate 143 serves as a coordination point for Zn(2+). Residue glutamate 177 is the Proton acceptor of the active site. Glutamate 178, aspartate 200, and histidine 382 together coordinate Zn(2+).

The protein belongs to the peptidase M20B family. Zn(2+) is required as a cofactor.

It is found in the cytoplasm. The catalysed reaction is Release of the N-terminal residue from a tripeptide.. Cleaves the N-terminal amino acid of tripeptides. This Streptococcus thermophilus (strain ATCC BAA-491 / LMD-9) protein is Peptidase T.